We begin with the raw amino-acid sequence, 116 residues long: MLYISGARLVGDEQVRIASTKIDGIGPKKAIQVRYRLGISGNIKIKELTKYQIDQIEQMIGQDHVVHWELKRGERADIERLISISCYRGIRHQDGSPLRGQRTHTNARTCRKLIRK.

It belongs to the universal ribosomal protein uS13 family. In terms of assembly, part of the small ribosomal subunit.

It localises to the mitochondrion. Functionally, located at the top of the head of the small subunit, it contacts several helices of the 18S rRNA. This is Small ribosomal subunit protein uS13m (RPS13) from Nicotiana tabacum (Common tobacco).